A 326-amino-acid chain; its full sequence is Probable cell division protein WhiA (326 aa).

The segment at residues 275–308 is a DNA-binding region (H-T-H motif); that stretch reads SLDELGRLADPPMTKDAIAGRIRRLLAMADKRAS.

It belongs to the WhiA family.

Its function is as follows. Involved in cell division and chromosome segregation. The polypeptide is Probable cell division protein WhiA (Renibacterium salmoninarum (strain ATCC 33209 / DSM 20767 / JCM 11484 / NBRC 15589 / NCIMB 2235)).